A 327-amino-acid chain; its full sequence is DNA-directed RNA polymerase subunit alpha (327 aa).

The interval 1–242 (MRKFLKYQLD…AHLEPIVNID (242 aa)) is alpha N-terminal domain (alpha-NTD). Positions 259–327 (KRQNASISID…TERSLELKKD (69 aa)) are alpha C-terminal domain (alpha-CTD).

This sequence belongs to the RNA polymerase alpha chain family. As to quaternary structure, homodimer. The RNAP catalytic core consists of 2 alpha, 1 beta, 1 beta' and 1 omega subunit. When a sigma factor is associated with the core the holoenzyme is formed, which can initiate transcription.

The enzyme catalyses RNA(n) + a ribonucleoside 5'-triphosphate = RNA(n+1) + diphosphate. Its function is as follows. DNA-dependent RNA polymerase catalyzes the transcription of DNA into RNA using the four ribonucleoside triphosphates as substrates. This Ureaplasma parvum serovar 3 (strain ATCC 700970) protein is DNA-directed RNA polymerase subunit alpha.